The following is a 349-amino-acid chain: MAILSIVSIFAAEKSYSIPPASNKLLASPALNPLYDAKADAEINVWCDEFLKLQPGSEKSVFIRESRLGLLAAYAYPSISYEKIVPVAKFIAWLFLADDILDNPEISSSDMRNVATAYKMVFKGRFDEAALLVKNQELLRQVKMLSEVLKELSLHLVDKSGRFMNSMTKVLDMFEIESNWLHKQIVPNLDTYMWLREITSGVAPCFAMLDGLLQLGLEERGVLDHPLIRKVEEIGTHHIALHNDLISFRKEWAKGNYLNAVPILASIHKCGLNEAIAMLASMVEDLEKEFIGTKQEIISSGLARKQGVMDYVNGVEVWMAANAEWGWLSARYHGIGWIPPPEKSGTFQL.

Residues D98, D102, N243, and S247 each coordinate Mg(2+). The DDXXD motif motif lies at 98–102 (DDILD).

Belongs to the terpene synthase family. Requires Mg(2+) as cofactor.

It participates in secondary metabolite biosynthesis; terpenoid biosynthesis. Its function is as follows. Sesquiterpene synthase converting farnesyl diphosphate to six sesquiterpenes, with beta-elemene, delta-cadinene and an unidentified oxygenated sesquiterpene as the major products. Has no diterpene synthase activity. This is Microbial Terpene synthase-like protein 1 from Selaginella moellendorffii (Spikemoss).